The following is an 89-amino-acid chain: Small ribosomal subunit protein uS15c (89 aa).

This sequence belongs to the universal ribosomal protein uS15 family. In terms of assembly, part of the 30S ribosomal subunit.

Its subcellular location is the plastid. The protein localises to the chloroplast. The chain is Small ribosomal subunit protein uS15c (rps15) from Chloranthus spicatus (Chulantree).